Reading from the N-terminus, the 564-residue chain is Poly(U)-binding-splicing factor PUF60 (564 aa).

The tract at residues 1–521 (MATATIALQV…EDAEIIVKIF (521 aa)) is inhibits homodimerization. Residues 37 to 61 (KWKPPQGTESIKMENGQSTGTKLGL) are disordered. Lys-48 is covalently cross-linked (Glycyl lysine isopeptide (Lys-Gly) (interchain with G-Cter in SUMO2)). Thr-65 bears the Phosphothreonine mark. Residues 82 to 564 (QSIKSVLVKQ…ERFDNSDLSA (483 aa)) form an inhibits transcriptional repression, interaction with ERCC3 and apoptosis induction region. A Glycyl lysine isopeptide (Lys-Gly) (interchain with G-Cter in SUMO2) cross-link involves residue Lys-85. Ser-117 carries the post-translational modification Phosphoserine. 2 consecutive RRM domains span residues 134–212 (CRVY…RPSN) and 231–309 (NRIY…KAVT). Ser-249 carries the post-translational modification Phosphoserine. Lys-256 carries the post-translational modification N6-acetyllysine. Thr-319 is modified (phosphothreonine). Residues 421-442 (KKEKEEEELFPESERPEMLSEQ) are disordered. Lys-424 is covalently cross-linked (Glycyl lysine isopeptide (Lys-Gly) (interchain with G-Cter in SUMO2)). A compositionally biased stretch (basic and acidic residues) spans 432–442 (ESERPEMLSEQ). Position 459 is an N6-acetyllysine (Lys-459). Lys-463 participates in a covalent cross-link: Glycyl lysine isopeptide (Lys-Gly) (interchain with G-Cter in SUMO2). In terms of domain architecture, RRM 3; atypical spans 467-554 (TVMVLRNMVD…RKVVAEVYDQ (88 aa)).

This sequence belongs to the RRM half pint family. Homodimer. Associates with the spliceosome. Found in a complex with RO60 and Y5 RNA. Found in a complex with FUBP1 and far upstream element (FUSE) DNA segment. Interacts directly with ERCC3. Interacts with CDK7 and GTF2H1. Interacts with SRSF11/P54. Interacts with ARGLU1; interaction may be involved in ARGLU1-mediated modulation of alternative splicing.

It is found in the nucleus. Functionally, DNA- and RNA-binding protein, involved in several nuclear processes such as pre-mRNA splicing, apoptosis and transcription regulation. In association with FUBP1 regulates MYC transcription at the P2 promoter through the core-TFIIH basal transcription factor. Acts as a transcriptional repressor through the core-TFIIH basal transcription factor. Represses FUBP1-induced transcriptional activation but not basal transcription. Decreases ERCC3 helicase activity. Is also involved in pre-mRNA splicing. Promotes splicing of an intron with weak 3'-splice site and pyrimidine tract in a cooperative manner with U2AF2. Involved in apoptosis induction when overexpressed in HeLa cells. Modulates alternative splicing of several mRNAs. Binds to relaxed DNA of active promoter regions. Binds to the pyrimidine tract and 3'-splice site regions of pre-mRNA; binding is enhanced in presence of U2AF2. Binds to Y5 RNA in association with RO60. Binds to poly(U) RNA. This chain is Poly(U)-binding-splicing factor PUF60, found in Rattus norvegicus (Rat).